A 506-amino-acid polypeptide reads, in one-letter code: MSEHFILQPGQLSLLSIKQILDEGQSCVLAESAFELINASHQTVRKVIDEKKTVYGINTGFGSLANQTISADCLKELQRNIVLSHACGTGKLLPDDVVALILLLKINNLSQGYSGVRLELINALIALFNHKVYPCIPSKGSVGASGDLVPLAHLSLPLLGEGEVRHQGQLISAEEGLKLAGLKPLELEAKEGLALLNGLQVSTALALSALFISETLFETAIISGSLSVDAASGSDVPFDDRIHQTRGHQAQISAASMYRNLLAGSQIRESHRHCNRVQDPYSLRCQPQIMGAVLHQMQFVGQTLQVEANAISDNPLVFAEQGDILSGGNFHGEIIAMAADNLALALSEIGGSAERRIALLIDKNFSGLPAFLVRESGLNSGFMIAHVTAASCASDNKALAHPHSVDSLPTSANQEDHVSMATSAARRLHEMIDNTSTILAIELLAACQGLEFHKPLKTSPQLDKIYQSVRSVVKEYDKDRYFAPDIEKIKKKILDKEFSLLTLTNE.

The 5-imidazolinone (Ala-Gly) cross-link spans 144 to 146; that stretch reads ASG. S145 carries the 2,3-didehydroalanine (Ser) modification.

This sequence belongs to the PAL/histidase family. Post-translationally, contains an active site 4-methylidene-imidazol-5-one (MIO), which is formed autocatalytically by cyclization and dehydration of residues Ala-Ser-Gly.

It localises to the cytoplasm. The enzyme catalyses L-histidine = trans-urocanate + NH4(+). Its pathway is amino-acid degradation; L-histidine degradation into L-glutamate; N-formimidoyl-L-glutamate from L-histidine: step 1/3. The sequence is that of Histidine ammonia-lyase from Legionella pneumophila (strain Lens).